A 574-amino-acid polypeptide reads, in one-letter code: 5'-nucleotidase (574 aa).

A signal peptide spans 1-26 (MNPGAARTPALRILALGALLWPAARP). Zn(2+) contacts are provided by Asp36 and His38. Cys51 and Cys57 are joined by a disulfide. A glycan (N-linked (GlcNAc...) asparagine) is linked at Asn53. 4 residues coordinate Zn(2+): Asp85, Asn117, His220, and His243. Residues Asn311 and Asn333 are each glycosylated (N-linked (GlcNAc...) asparagine). 2 disulfides stabilise this stretch: Cys353-Cys358 and Cys365-Cys387. An AMP-binding site is contributed by Arg354. Arg354 serves as a coordination point for IMP. Asn390 and Arg395 together coordinate AMP. Residues Asn390 and Arg395 each contribute to the IMP site. A glycan (N-linked (GlcNAc...) asparagine) is linked at Asn403. Residue Phe417 coordinates AMP. Phe417 contacts IMP. An intrachain disulfide couples Cys476 to Cys479. AMP contacts are provided by Phe500 and Asp506. Residues Phe500 and Asp506 each contribute to the IMP site. The GPI-anchor amidated serine moiety is linked to residue Ser549. Positions 550-574 (AGSHCCGSFSLIFLSVLAVIIILYQ) are cleaved as a propeptide — removed in mature form.

The protein belongs to the 5'-nucleotidase family. As to quaternary structure, homodimer. The cofactor is Zn(2+).

Its subcellular location is the cell membrane. It carries out the reaction a ribonucleoside 5'-phosphate + H2O = a ribonucleoside + phosphate. It catalyses the reaction a 2'-deoxyribonucleoside 5'-phosphate + H2O = a 2'-deoxyribonucleoside + phosphate. The enzyme catalyses dTMP + H2O = thymidine + phosphate. The catalysed reaction is CMP + H2O = cytidine + phosphate. It carries out the reaction IMP + H2O = inosine + phosphate. It catalyses the reaction AMP + H2O = adenosine + phosphate. The enzyme catalyses GMP + H2O = guanosine + phosphate. The catalysed reaction is UMP + H2O = uridine + phosphate. It carries out the reaction dAMP + H2O = 2'-deoxyadenosine + phosphate. It catalyses the reaction dCMP + H2O = 2'-deoxycytidine + phosphate. Its function is as follows. Catalyzes the hydrolysis of nucleotide monophosphates, releasing inorganic phosphate and the corresponding nucleoside, with AMP being the preferred substrate. Shows a preference for ribonucleotide monophosphates over their equivalent deoxyribose forms. Other substrates include IMP, UMP, GMP, CMP, dAMP, dCMP, dTMP, NAD and NMN. The protein is 5'-nucleotidase (NT5E) of Bos taurus (Bovine).